A 365-amino-acid chain; its full sequence is Phospho-N-acetylmuramoyl-pentapeptide-transferase (365 aa).

The next 10 membrane-spanning stretches (helical) occupy residues 3 to 23 (HIII…PILI), 54 to 74 (GIAI…ASVF), 81 to 101 (PTAS…LGFL), 119 to 139 (GKLL…LLFL), 162 to 182 (IAIG…YILV), 198 to 218 (LAAG…FWQF), 239 to 259 (LSIL…WNAA), 263 to 283 (IFMG…LSVT), 289 to 309 (LMIV…IQVV), and 342 to 362 (FWLL…ADWL).

This sequence belongs to the glycosyltransferase 4 family. MraY subfamily. Requires Mg(2+) as cofactor.

The protein resides in the cell membrane. It carries out the reaction UDP-N-acetyl-alpha-D-muramoyl-L-alanyl-gamma-D-glutamyl-meso-2,6-diaminopimeloyl-D-alanyl-D-alanine + di-trans,octa-cis-undecaprenyl phosphate = di-trans,octa-cis-undecaprenyl diphospho-N-acetyl-alpha-D-muramoyl-L-alanyl-D-glutamyl-meso-2,6-diaminopimeloyl-D-alanyl-D-alanine + UMP. It participates in cell wall biogenesis; peptidoglycan biosynthesis. Its function is as follows. Catalyzes the initial step of the lipid cycle reactions in the biosynthesis of the cell wall peptidoglycan: transfers peptidoglycan precursor phospho-MurNAc-pentapeptide from UDP-MurNAc-pentapeptide onto the lipid carrier undecaprenyl phosphate, yielding undecaprenyl-pyrophosphoryl-MurNAc-pentapeptide, known as lipid I. The sequence is that of Phospho-N-acetylmuramoyl-pentapeptide-transferase from Corynebacterium kroppenstedtii (strain DSM 44385 / JCM 11950 / CIP 105744 / CCUG 35717).